The sequence spans 158 residues: Lipoprotein signal peptidase (158 aa).

A run of 4 helical transmembrane segments spans residues 7-27 (LFWI…YWVV), 38-58 (LLTG…FSLL), 68-88 (LSLG…TLNL), and 92-112 (LGYG…FVLG). Active-site residues include Asp116 and Asp132. The chain crosses the membrane as a helical span at residues 125-145 (FPVFNVADSFISIGIVFLLIA).

This sequence belongs to the peptidase A8 family.

It localises to the cell inner membrane. It carries out the reaction Release of signal peptides from bacterial membrane prolipoproteins. Hydrolyzes -Xaa-Yaa-Zaa-|-(S,diacylglyceryl)Cys-, in which Xaa is hydrophobic (preferably Leu), and Yaa (Ala or Ser) and Zaa (Gly or Ala) have small, neutral side chains.. It participates in protein modification; lipoprotein biosynthesis (signal peptide cleavage). Its function is as follows. This protein specifically catalyzes the removal of signal peptides from prolipoproteins. The chain is Lipoprotein signal peptidase from Nostoc punctiforme (strain ATCC 29133 / PCC 73102).